The primary structure comprises 570 residues: Periplasmic trehalase (570 aa).

The first 34 residues, 1–34, serve as a signal peptide directing secretion; the sequence is MIPPEIRRSVLLQKAIKLALAGTLLTFASFSATA. Residues arginine 159, 166-167, asparagine 203, 212-214, 284-286, and glycine 317 each bind substrate; these read WD, HSQ, and RPE. Catalysis depends on proton donor/acceptor residues aspartate 319 and glutamate 503. Glutamate 518 serves as a coordination point for substrate. The disordered stretch occupies residues 544 to 570; sequence KPCDSVPSTRPASLSATPTKTPSAATQ. A compositionally biased stretch (low complexity) spans 554–570; sequence PASLSATPTKTPSAATQ.

It belongs to the glycosyl hydrolase 37 family. As to quaternary structure, monomer.

The protein localises to the periplasm. It catalyses the reaction alpha,alpha-trehalose + H2O = alpha-D-glucose + beta-D-glucose. Its function is as follows. Provides the cells with the ability to utilize trehalose at high osmolarity by splitting it into glucose molecules that can subsequently be taken up by the phosphotransferase-mediated uptake system. In Salmonella paratyphi C (strain RKS4594), this protein is Periplasmic trehalase.